A 72-amino-acid polypeptide reads, in one-letter code: Translation initiation factor IF-1 (72 aa).

The S1-like domain occupies Met1 to Lys72.

Belongs to the IF-1 family. Component of the 30S ribosomal translation pre-initiation complex which assembles on the 30S ribosome in the order IF-2 and IF-3, IF-1 and N-formylmethionyl-tRNA(fMet); mRNA recruitment can occur at any time during PIC assembly.

The protein resides in the cytoplasm. In terms of biological role, one of the essential components for the initiation of protein synthesis. Stabilizes the binding of IF-2 and IF-3 on the 30S subunit to which N-formylmethionyl-tRNA(fMet) subsequently binds. Helps modulate mRNA selection, yielding the 30S pre-initiation complex (PIC). Upon addition of the 50S ribosomal subunit IF-1, IF-2 and IF-3 are released leaving the mature 70S translation initiation complex. The chain is Translation initiation factor IF-1 from Jannaschia sp. (strain CCS1).